The chain runs to 82 residues: Sec-independent protein translocase protein TatA (82 aa).

A helical transmembrane segment spans residues 2–22 (GFGGISLWQLLIVLAIIVLLF). The disordered stretch occupies residues 43 to 82 (KAMSDEKNTDKEKPEQIQKSEESAPLDSAHTEKNKDNNKV). Basic and acidic residues-rich tracts occupy residues 44-64 (AMSD…KSEE) and 71-82 (AHTEKNKDNNKV).

Belongs to the TatA/E family. In terms of assembly, the Tat system comprises two distinct complexes: a TatABC complex, containing multiple copies of TatA, TatB and TatC subunits, and a separate TatA complex, containing only TatA subunits. Substrates initially bind to the TatABC complex, which probably triggers association of the separate TatA complex to form the active translocon.

Its subcellular location is the cell inner membrane. Functionally, part of the twin-arginine translocation (Tat) system that transports large folded proteins containing a characteristic twin-arginine motif in their signal peptide across membranes. TatA could form the protein-conducting channel of the Tat system. The protein is Sec-independent protein translocase protein TatA of Pseudoalteromonas translucida (strain TAC 125).